The chain runs to 61 residues: Potassium channel toxin alpha-KTx 6.9 (61 aa).

The signal sequence occupies residues 1-23 (MNAKFILLLLVVTTTTLLPDAKG). Intrachain disulfides connect cysteine 29-cysteine 50, cysteine 35-cysteine 55, cysteine 39-cysteine 57, and cysteine 45-cysteine 60.

Belongs to the short scorpion toxin superfamily. Potassium channel inhibitor family. Alpha-KTx 06 subfamily. As to expression, expressed by the venom gland.

The protein localises to the secreted. In terms of biological role, inhibits Kv1.2/KCNA2 and Kv1.3/KCNA3 voltage-gated potassium channels. The protein is Potassium channel toxin alpha-KTx 6.9 of Opistophthalmus carinatus (African yellow leg scorpion).